The sequence spans 216 residues: Imidazoleglycerol-phosphate dehydratase (216 aa).

Phosphoserine is present on S211.

The protein belongs to the imidazoleglycerol-phosphate dehydratase family.

It carries out the reaction D-erythro-1-(imidazol-4-yl)glycerol 3-phosphate = 3-(imidazol-4-yl)-2-oxopropyl phosphate + H2O. Its pathway is amino-acid biosynthesis; L-histidine biosynthesis; L-histidine from 5-phospho-alpha-D-ribose 1-diphosphate: step 6/9. In Schizosaccharomyces pombe (strain 972 / ATCC 24843) (Fission yeast), this protein is Imidazoleglycerol-phosphate dehydratase (his5).